The sequence spans 334 residues: D-fructose 1,6-bisphosphatase class 2/sedoheptulose 1,7-bisphosphatase (334 aa).

The Mn(2+) site is built by D33, E57, D85, and E88. Substrate-binding positions include 88–90 (EGT), Y119, 164–166 (RAR), and 186–188 (DGD). E213 contacts Mn(2+).

The protein belongs to the FBPase class 2 family. As to quaternary structure, homotetramer. Requires Mn(2+) as cofactor.

It catalyses the reaction beta-D-fructose 1,6-bisphosphate + H2O = beta-D-fructose 6-phosphate + phosphate. The catalysed reaction is D-sedoheptulose 1,7-bisphosphate + H2O = D-sedoheptulose 7-phosphate + phosphate. It functions in the pathway carbohydrate biosynthesis; Calvin cycle. Catalyzes the hydrolysis of fructose 1,6-bisphosphate (Fru 1,6-P2) and sedoheptulose 1,7-bisphosphate (Sed 1,7-P2) to fructose 6-phosphate and sedoheptulose 7-phosphate, respectively. The protein is D-fructose 1,6-bisphosphatase class 2/sedoheptulose 1,7-bisphosphatase of Prochlorococcus marinus (strain MIT 9313).